We begin with the raw amino-acid sequence, 579 residues long: Fatty-acid amide hydrolase 1 (579 aa).

The helical transmembrane segment at 9–29 (AFSGPSGVALACCLVAAALAL) threads the bilayer. Residues 30–403 (RWSSRRMARG…GDYVDSCLGD (374 aa)) lie on the Cytoplasmic side of the membrane. Lysine 142 serves as the catalytic Charge relay system. Substrate contacts are provided by residues methionine 191, serine 217, and 238–241 (IGGS). Catalysis depends on serine 217, which acts as the Charge relay system. Residue serine 241 is the Acyl-ester intermediate of the active site. Serine 241 carries the phosphoserine modification. The stretch at 404 to 433 (LISILRLPKWLKGLLAFMLRPLLPRLAGFL) is an intramembrane region. Residues 434-579 (SSLRPRSAGK…RLMAPGRQPS (146 aa)) are Cytoplasmic-facing.

This sequence belongs to the amidase family. In terms of assembly, homodimer.

It localises to the endoplasmic reticulum membrane. It is found in the golgi apparatus membrane. The enzyme catalyses N-(5Z,8Z,11Z,14Z-eicosatetraenoyl)-ethanolamine + H2O = ethanolamine + (5Z,8Z,11Z,14Z)-eicosatetraenoate. The catalysed reaction is (9Z)-octadecenamide + H2O = (9Z)-octadecenoate + NH4(+). It catalyses the reaction 2-(5Z,8Z,11Z,14Z-eicosatetraenoyl)-glycerol + H2O = glycerol + (5Z,8Z,11Z,14Z)-eicosatetraenoate + H(+). It carries out the reaction 1-O-methyl-(5Z,8Z,11Z,14Z)-eicosatetraenoate + H2O = methanol + (5Z,8Z,11Z,14Z)-eicosatetraenoate + H(+). The enzyme catalyses (9Z,12Z,15Z)-octadecatrienamide + H2O = (9Z,12Z,15Z)-octadecatrienoate + NH4(+). The catalysed reaction is (5Z,8Z,11Z,14Z)-eicosatetraenamide + H2O = (5Z,8Z,11Z,14Z)-eicosatetraenoate + NH4(+). It catalyses the reaction (6Z)-octadecenamide + H2O = (6Z)-octadecenoate + NH4(+). It carries out the reaction (15Z)-tetracosenamide + H2O = (15Z)-tetracosenoate + NH4(+). The enzyme catalyses (8Z,11Z,14Z)-eicosatrienamide + H2O = (8Z,11Z,14Z)-eicosatrienoate + NH4(+). The catalysed reaction is (11Z,14Z,17Z)-eicosatrienamide + H2O = (11Z,14Z,17Z)-eicosatrienoate + NH4(+). It catalyses the reaction (11Z,14Z)-eicosadienamide + H2O = (11Z,14Z)-eicosadienoate + NH4(+). It carries out the reaction (9Z,12Z)-octadecadienamide + H2O = (9Z,12Z)-octadecadienoate + NH4(+). The enzyme catalyses tetradecamide + H2O = tetradecanoate + NH4(+). The catalysed reaction is N-(9Z-octadecenoyl) ethanolamine + H2O = ethanolamine + (9Z)-octadecenoate. It catalyses the reaction N-(9Z-octadecenoyl)-taurine + H2O = taurine + (9Z)-octadecenoate. It carries out the reaction (11Z)-eicosenamide + H2O = (11Z)-eicosenoate + NH4(+). The enzyme catalyses N-(9Z-hexadecenoyl) ethanolamine + H2O = (9Z)-hexadecenoate + ethanolamine. The catalysed reaction is N-octadecanoyl ethanolamine + H2O = octadecanoate + ethanolamine. It catalyses the reaction N-docosanoyl-ethanolamine + H2O = docosanoate + ethanolamine. It carries out the reaction N-tetracosanoyl-taurine + H2O = tetracosanoate + taurine. The enzyme catalyses N-(15Z-tetracosenoyl)-ethanolamine + H2O = (15Z)-tetracosenoate + ethanolamine. The catalysed reaction is N-docosanoyl-taurine + H2O = docosanoate + taurine. It catalyses the reaction N-(15Z-tetracosenoyl)-taurine + H2O = (15Z)-tetracosenoate + taurine. It carries out the reaction N-tricosanoyl-taurine + H2O = tricosanoate + taurine. The enzyme catalyses (9Z)-octadecenoate + glycine = N-(9Z-octadecenoyl)glycine + H2O. The catalysed reaction is N-(5Z,8Z,11Z,14Z)-eicosatetraenoyl-glycine + H2O = (5Z,8Z,11Z,14Z)-eicosatetraenoate + glycine. It catalyses the reaction N-(5Z,8Z,11Z,14Z-eicosatetraenoyl)-L-serine + H2O = (5Z,8Z,11Z,14Z)-eicosatetraenoate + L-serine. Inhibited by trifluoromethyl ketone. Functionally, catalyzes the hydrolysis of endogenous amidated lipids like the sleep-inducing lipid oleamide ((9Z)-octadecenamide), the endocannabinoid anandamide (N-(5Z,8Z,11Z,14Z-eicosatetraenoyl)-ethanolamine), as well as other fatty amides, to their corresponding fatty acids, thereby regulating the signaling functions of these molecules. Also catalyzes the hydrolysis of the endocannabinoid 2-arachidonoylglycerol (2-(5Z,8Z,11Z,14Z-eicosatetraenoyl)-glycerol). FAAH cooperates with PM20D1 in the hydrolysis of amino acid-conjugated fatty acids such as N-fatty acyl glycine and N-fatty acyl-L-serine, thereby acting as a physiological regulator of specific subsets of intracellular, but not of extracellular, N-fatty acyl amino acids. In Sus scrofa (Pig), this protein is Fatty-acid amide hydrolase 1 (FAAH).